The primary structure comprises 77 residues: U8-lycotoxin-Ls1b (77 aa).

Positions 1–20 are cleaved as a signal peptide; that stretch reads MKLIIFTGLVLFAIVSLIEA. Positions 21–26 are excised as a propeptide; it reads QAENEK.

Belongs to the neurotoxin 19 (CSTX) family. 08 (U8-Lctx) subfamily. In terms of processing, contains 4 disulfide bonds. In terms of tissue distribution, expressed by the venom gland.

It is found in the secreted. This chain is U8-lycotoxin-Ls1b, found in Lycosa singoriensis (Wolf spider).